The sequence spans 115 residues: T cell receptor beta variable 16 (115 aa).

The N-terminal stretch at 1–20 is a signal peptide; that stretch reads MSPIFTCITILCLLAAGSPG. In terms of domain architecture, Ig-like spans 21–115; that stretch reads EEVAQTPKHL…SAVYFCASSQ (95 aa). A disulfide bridge connects residues C42 and C111.

As to quaternary structure, alpha-beta TR is a heterodimer composed of an alpha and beta chain; disulfide-linked. The alpha-beta TR is associated with the transmembrane signaling CD3 coreceptor proteins to form the TR-CD3 (TcR or TCR). The assembly of alpha-beta TR heterodimers with CD3 occurs in the endoplasmic reticulum where a single alpha-beta TR heterodimer associates with one CD3D-CD3E heterodimer, one CD3G-CD3E heterodimer and one CD247 homodimer forming a stable octameric structure. CD3D-CD3E and CD3G-CD3E heterodimers preferentially associate with TR alpha and TR beta chains, respectively. The association of the CD247 homodimer is the last step of TcR assembly in the endoplasmic reticulum and is required for transport to the cell surface.

It localises to the cell membrane. In terms of biological role, v region of the variable domain of T cell receptor (TR) beta chain that participates in the antigen recognition. Alpha-beta T cell receptors are antigen specific receptors which are essential to the immune response and are present on the cell surface of T lymphocytes. Recognize peptide-major histocompatibility (MH) (pMH) complexes that are displayed by antigen presenting cells (APC), a prerequisite for efficient T cell adaptive immunity against pathogens. Binding of alpha-beta TR to pMH complex initiates TR-CD3 clustering on the cell surface and intracellular activation of LCK that phosphorylates the ITAM motifs of CD3G, CD3D, CD3E and CD247 enabling the recruitment of ZAP70. In turn ZAP70 phosphorylates LAT, which recruits numerous signaling molecules to form the LAT signalosome. The LAT signalosome propagates signal branching to three major signaling pathways, the calcium, the mitogen-activated protein kinase (MAPK) kinase and the nuclear factor NF-kappa-B (NF-kB) pathways, leading to the mobilization of transcription factors that are critical for gene expression and essential for T cell growth and differentiation. The T cell repertoire is generated in the thymus, by V-(D)-J rearrangement. This repertoire is then shaped by intrathymic selection events to generate a peripheral T cell pool of self-MH restricted, non-autoaggressive T cells. Post-thymic interaction of alpha-beta TR with the pMH complexes shapes TR structural and functional avidity. The chain is T cell receptor beta variable 16 from Homo sapiens (Human).